Here is a 457-residue protein sequence, read N- to C-terminus: Oxygen-independent coproporphyrinogen III oxidase (457 aa).

The 233-residue stretch at 47-279 folds into the Radical SAM core domain; sequence LKNPMPLSLY…EILESLISFL (233 aa). Tyr56 contributes to the S-adenosyl-L-methionine binding site. [4Fe-4S] cluster contacts are provided by Cys62 and Cys66. Position 68 (Phe68) interacts with S-adenosyl-L-methionine. Cys69 contacts [4Fe-4S] cluster. Residues Gly113, 114 to 115, Glu147, Gln174, Arg186, Asp211, Ala245, and Ile331 contribute to the S-adenosyl-L-methionine site; that span reads GT.

The protein belongs to the anaerobic coproporphyrinogen-III oxidase family. In terms of assembly, monomer. Requires [4Fe-4S] cluster as cofactor.

Its subcellular location is the cytoplasm. It catalyses the reaction coproporphyrinogen III + 2 S-adenosyl-L-methionine = protoporphyrinogen IX + 2 5'-deoxyadenosine + 2 L-methionine + 2 CO2. The protein operates within porphyrin-containing compound metabolism; protoporphyrin-IX biosynthesis; protoporphyrinogen-IX from coproporphyrinogen-III (AdoMet route): step 1/1. Functionally, involved in the heme biosynthesis. Catalyzes the anaerobic oxidative decarboxylation of propionate groups of rings A and B of coproporphyrinogen III to yield the vinyl groups in protoporphyrinogen IX. This is Oxygen-independent coproporphyrinogen III oxidase (hemN) from Helicobacter pylori (strain J99 / ATCC 700824) (Campylobacter pylori J99).